A 126-amino-acid polypeptide reads, in one-letter code: Large ribosomal subunit protein bL12c (126 aa).

Belongs to the bacterial ribosomal protein bL12 family. As to quaternary structure, homodimer. Part of the ribosomal stalk of the 50S ribosomal subunit. Forms a multimeric L10(L12)X complex, where L10 forms an elongated spine to which 2 to 4 L12 dimers bind in a sequential fashion. Binds GTP-bound translation factors.

Its subcellular location is the plastid. It is found in the cyanelle. Functionally, forms part of the ribosomal stalk which helps the ribosome interact with GTP-bound translation factors. Is thus essential for accurate translation. The sequence is that of Large ribosomal subunit protein bL12c from Cyanophora paradoxa.